A 233-amino-acid chain; its full sequence is Adenylyl cyclase-associated protein 1 (233 aa).

Y14 carries the post-translational modification Phosphotyrosine. S17 bears the Phosphoserine mark. Disordered regions lie at residues 43-71 and 91-129; these read VDKXGPVAKELSGLPSGPSAGSGPPPSAL and DEKTHKNPADKAQSGPVRXGPKPFSASKPGISPSPKPVT. Over residues 53 to 64 the composition is skewed to low complexity; it reads LSGLPSGPSAGS. Position 101 is an N6-methyllysine (K101). S104, S115, S122, and S124 each carry phosphoserine. K151 is covalently cross-linked (Glycyl lysine isopeptide (Lys-Gly) (interchain with G-Cter in SUMO1)). The region spanning 173-221 is the C-CAP/cofactor C-like domain; it reads VPXISINKXDGRHIYLSKNSLDCEIVSAKSSEMNVLIPTEGGDFNEFPV.

Belongs to the CAP family. As to quaternary structure, homodimer. Binds actin monomers.

It is found in the cell membrane. In terms of biological role, directly regulates filament dynamics and has been implicated in a number of complex developmental and morphological processes, including mRNA localization and the establishment of cell polarity. The sequence is that of Adenylyl cyclase-associated protein 1 (CAP1) from Sus scrofa (Pig).